The sequence spans 235 residues: Carbohydrate deacetylase (235 aa).

Mg(2+) contacts are provided by H61 and H124.

It belongs to the YdjC deacetylase family. The cofactor is Mg(2+).

Probably catalyzes the deacetylation of acetylated carbohydrates an important step in the degradation of oligosaccharides. This chain is Carbohydrate deacetylase, found in Bacillus cereus (strain 03BB102).